A 532-amino-acid polypeptide reads, in one-letter code: 2,3-bisphosphoglycerate-independent phosphoglycerate mutase (532 aa).

Residues aspartate 15 and serine 65 each coordinate Mn(2+). Serine 65 functions as the Phosphoserine intermediate in the catalytic mechanism. Substrate-binding positions include histidine 126, 156 to 157 (RD), arginine 188, arginine 194, 258 to 261 (RPDR), and lysine 331. Positions 398, 402, 439, 440, and 457 each coordinate Mn(2+).

It belongs to the BPG-independent phosphoglycerate mutase family. Monomer. Requires Mn(2+) as cofactor.

The enzyme catalyses (2R)-2-phosphoglycerate = (2R)-3-phosphoglycerate. Its pathway is carbohydrate degradation; glycolysis; pyruvate from D-glyceraldehyde 3-phosphate: step 3/5. Its function is as follows. Catalyzes the interconversion of 2-phosphoglycerate and 3-phosphoglycerate. The protein is 2,3-bisphosphoglycerate-independent phosphoglycerate mutase of Rippkaea orientalis (strain PCC 8801 / RF-1) (Cyanothece sp. (strain PCC 8801)).